The sequence spans 216 residues: HTH-type transcriptional regulator EthR (216 aa).

Positions 1 to 10 (MTTSAASQAS) are enriched in polar residues. Residues 1 to 24 (MTTSAASQASLPRGRRTARPSGDD) form a disordered region. Residues 23-83 (DDRELAILAT…TLLDRVVNQA (61 aa)) form the HTH tetR-type domain. The segment at residues 46–65 (SVDDLAKGAGISRPTFYFYF) is a DNA-binding region (H-T-H motif).

Homodimer.

Functionally, involved in the repression of the monooxygenase EthA which is responsible of the formation of the active metabolite of ethionamide (ETH). This Mycobacterium bovis (strain ATCC BAA-935 / AF2122/97) protein is HTH-type transcriptional regulator EthR (ethR).